Reading from the N-terminus, the 599-residue chain is Elongation factor 4 (599 aa).

Residues 2 to 184 (NYKRNFSIIA…RLVRDIPAPK (183 aa)) form the tr-type G domain. Residues 14–19 (DHGKST) and 131–134 (NKID) contribute to the GTP site.

Belongs to the TRAFAC class translation factor GTPase superfamily. Classic translation factor GTPase family. LepA subfamily.

The protein resides in the cell membrane. The enzyme catalyses GTP + H2O = GDP + phosphate + H(+). Functionally, required for accurate and efficient protein synthesis under certain stress conditions. May act as a fidelity factor of the translation reaction, by catalyzing a one-codon backward translocation of tRNAs on improperly translocated ribosomes. Back-translocation proceeds from a post-translocation (POST) complex to a pre-translocation (PRE) complex, thus giving elongation factor G a second chance to translocate the tRNAs correctly. Binds to ribosomes in a GTP-dependent manner. This Hamiltonella defensa subsp. Acyrthosiphon pisum (strain 5AT) protein is Elongation factor 4.